The sequence spans 102 residues: Phosphoribosyl-ATP pyrophosphatase (102 aa).

Belongs to the PRA-PH family.

It is found in the cytoplasm. It catalyses the reaction 1-(5-phospho-beta-D-ribosyl)-ATP + H2O = 1-(5-phospho-beta-D-ribosyl)-5'-AMP + diphosphate + H(+). The protein operates within amino-acid biosynthesis; L-histidine biosynthesis; L-histidine from 5-phospho-alpha-D-ribose 1-diphosphate: step 2/9. The polypeptide is Phosphoribosyl-ATP pyrophosphatase (Dinoroseobacter shibae (strain DSM 16493 / NCIMB 14021 / DFL 12)).